A 215-amino-acid chain; its full sequence is Nascent polypeptide-associated complex subunit alpha (215 aa).

Residues 1-81 (MPGEATETVP…SEKKARKAMS (81 aa)) are disordered. Over residues 9–28 (VPATEQELPQPQAETGSGTE) the composition is skewed to polar residues. A compositionally biased stretch (acidic residues) spans 29-42 (SDSDESVPELEEQD). Ser43 carries the phosphoserine; by ILK1 modification. Residues 44 to 57 (TQTATQQAQLAAAA) show a composition bias toward low complexity. Residues 69-80 (QSRSEKKARKAM) are required for DNA-binding. One can recognise an NAC-A/B domain in the interval 70–135 (SRSEKKARKA…AKIEDLSQQA (66 aa)). The RNA/DNA-binding stretch occupies residues 93 to 108 (RVTIRKSKNILFVITK). Phosphoserine is present on Ser132. Lys142 carries the post-translational modification N6-acetyllysine; alternate. Lys142 is covalently cross-linked (Glycyl lysine isopeptide (Lys-Gly) (interchain with G-Cter in SUMO2); alternate). A Phosphothreonine; by GSK3-beta modification is found at Thr159. Thr161 is subject to Phosphothreonine. Phosphoserine is present on residues Ser166, Ser186, Ser191, and Ser203. In terms of domain architecture, UBA spans 176-213 (VEVKDIELVMSQANVSRAKAVRALKNNSNDIVNAIMEL).

This sequence belongs to the NAC-alpha family. As to quaternary structure, part of the nascent polypeptide-associated complex (NAC), which is a heterodimer of NACA and BTF3 (via NAC-A/B domains). NAC associates with ribosomes through the BTF3/NACB subunit and contacts the ribosomal protein L23, which is positioned near the exiting site. Both subunits can contact nascent polypeptide chains. NACA may also form homodimers, and only this form binds DNA. Interacts with TBP and JUN. In terms of processing, phosphorylation of Ser-43 by ILK during cell adhesion may promote nuclear localization. Phosphorylation of Thr-159 by GSK3B may promote proteasome mediated degradation. Isoform 1 appears to be ubiquitously expressed.

It is found in the cytoplasm. The protein resides in the nucleus. Functionally, prevents inappropriate targeting of non-secretory polypeptides to the endoplasmic reticulum (ER). Binds to nascent polypeptide chains as they emerge from the ribosome and blocks their interaction with the signal recognition particle (SRP), which normally targets nascent secretory peptides to the ER. Also reduces the inherent affinity of ribosomes for protein translocation sites in the ER membrane (M sites). Isoform 1 and isoform 2 appear to bind DNA and play roles in transcription. Isoform 1 may function as a specific coactivator for JUN, acting to stabilize the interaction of JUN homodimers with promoter elements. This Mus musculus (Mouse) protein is Nascent polypeptide-associated complex subunit alpha (Naca).